The sequence spans 520 residues: Lysine--tRNA ligase (520 aa).

The segment at methionine 1–alanine 21 is disordered. The segment covering proline 12–alanine 21 has biased composition (low complexity). Mg(2+) contacts are provided by glutamate 430 and glutamate 437.

The protein belongs to the class-II aminoacyl-tRNA synthetase family. As to quaternary structure, homodimer. The cofactor is Mg(2+).

The protein localises to the cytoplasm. It carries out the reaction tRNA(Lys) + L-lysine + ATP = L-lysyl-tRNA(Lys) + AMP + diphosphate. The sequence is that of Lysine--tRNA ligase from Variovorax paradoxus (strain S110).